We begin with the raw amino-acid sequence, 389 residues long: Type III polyketide synthase 21 (389 aa).

The active-site Nucleophile is Cys170.

Belongs to the thiolase-like superfamily. Chalcone/stilbene synthases family. As to expression, expressed in anthers. Expressed in young and adult flowers.

Its function is as follows. Plant type III polyketide synthases (PKSs) that catalyzes the condensation of fatty acyl-CoA with malonyl-CoA to generate triketide and tetraketide alpha-pyrones, the main components of pollen exine and potential sporopollenin precursors. This Oryza sativa subsp. japonica (Rice) protein is Type III polyketide synthase 21 (PKS21).